We begin with the raw amino-acid sequence, 303 residues long: N-acetyl-D-glucosamine kinase (303 aa).

ATP is bound by residues Gly-4–Lys-11 and Gly-133–Leu-140. Zn(2+) is bound by residues His-157, Cys-177, Cys-179, and Cys-184.

It belongs to the ROK (NagC/XylR) family. NagK subfamily.

The enzyme catalyses N-acetyl-D-glucosamine + ATP = N-acetyl-D-glucosamine 6-phosphate + ADP + H(+). It participates in cell wall biogenesis; peptidoglycan recycling. Its function is as follows. Catalyzes the phosphorylation of N-acetyl-D-glucosamine (GlcNAc) derived from cell-wall degradation, yielding GlcNAc-6-P. The protein is N-acetyl-D-glucosamine kinase of Salmonella newport (strain SL254).